Here is a 101-residue protein sequence, read N- to C-terminus: Small ribosomal subunit protein uS14 (101 aa).

The segment at 1–21 (MAKTSAVEKNKRRRKSVAQQA) is disordered.

This sequence belongs to the universal ribosomal protein uS14 family. As to quaternary structure, part of the 30S ribosomal subunit. Contacts proteins S3 and S10.

In terms of biological role, binds 16S rRNA, required for the assembly of 30S particles and may also be responsible for determining the conformation of the 16S rRNA at the A site. The protein is Small ribosomal subunit protein uS14 of Agrobacterium fabrum (strain C58 / ATCC 33970) (Agrobacterium tumefaciens (strain C58)).